A 365-amino-acid polypeptide reads, in one-letter code: Heat-inducible transcription repressor HrcA (365 aa).

This sequence belongs to the HrcA family.

In terms of biological role, negative regulator of class I heat shock genes (grpE-dnaK-dnaJ and groELS operons). Prevents heat-shock induction of these operons. The chain is Heat-inducible transcription repressor HrcA from Nodularia spumigena.